The sequence spans 124 residues: Small ribosomal subunit protein uS12 (124 aa).

Position 89 is a 3-methylthioaspartic acid (Asp89). Lys108 is subject to N6-acetyllysine.

It belongs to the universal ribosomal protein uS12 family. Part of the 30S ribosomal subunit. Contacts proteins S8 and S17. May interact with IF1 in the 30S initiation complex.

With S4 and S5 plays an important role in translational accuracy. Its function is as follows. Interacts with and stabilizes bases of the 16S rRNA that are involved in tRNA selection in the A site and with the mRNA backbone. Located at the interface of the 30S and 50S subunits, it traverses the body of the 30S subunit contacting proteins on the other side and probably holding the rRNA structure together. The combined cluster of proteins S8, S12 and S17 appears to hold together the shoulder and platform of the 30S subunit. The protein is Small ribosomal subunit protein uS12 of Escherichia coli (strain K12 / MC4100 / BW2952).